Reading from the N-terminus, the 489-residue chain is DBIRD complex subunit ZNF326 (489 aa).

Disordered stretches follow at residues 1 to 28 (MDRE…EMGD), 62 to 100 (EQGH…PSFT), 133 to 181 (VGSR…RPGL), and 205 to 263 (PPFK…KNSE). Over residues 7–22 (SYNQRSMDSYGNQSYS) the composition is skewed to polar residues. The segment covering 62 to 76 (EQGHFGDSYDGRYEN) has biased composition (basic and acidic residues). Polar residues predominate over residues 91-100 (GGSSWDPSFT). Positions 200–221 (KRKMAPPFKPVGVFGKKQKLSK) match the Bipartite nuclear localization signal motif. 2 C2H2 AKAP95-type zinc fingers span residues 273-295 (CSFC…STTH) and 365-388 (CSAC…SADH). Positions 431 to 489 (ETQPEEQQQEQEEEEEEEEQQEQAAVPEQDLSEEQPAAIAAEPEGEDFTCDPLTTTDEV) are disordered. The span at 433–451 (QPEEQQQEQEEEEEEEEQQ) shows a compositional bias: acidic residues.

Belongs to the AKAP95 family. In terms of assembly, component of the DBIRD complex.

The protein localises to the nucleus. In terms of biological role, core component of the DBIRD complex, a multiprotein complex that acts at the interface between core mRNP particles and RNA polymerase II (RNAPII) and integrates transcript elongation with the regulation of alternative splicing. This chain is DBIRD complex subunit ZNF326 (znf326), found in Xenopus tropicalis (Western clawed frog).